Consider the following 259-residue polypeptide: uncharacterized protein (259 aa).

The protein belongs to the methyltransferase superfamily.

This is an uncharacterized protein from Mycobacteroides abscessus (strain ATCC 19977 / DSM 44196 / CCUG 20993 / CIP 104536 / JCM 13569 / NCTC 13031 / TMC 1543 / L948) (Mycobacterium abscessus).